Here is a 70-residue protein sequence, read N- to C-terminus: Large ribosomal subunit protein bL31c (70 aa).

It belongs to the bacterial ribosomal protein bL31 family. Type A subfamily. As to quaternary structure, part of the 50S ribosomal subunit.

Its subcellular location is the plastid. It localises to the chloroplast. In terms of biological role, binds the 23S rRNA. This chain is Large ribosomal subunit protein bL31c, found in Pyropia yezoensis (Susabi-nori).